The primary structure comprises 684 residues: Signal peptide peptidase-like 2C (684 aa).

The N-terminal stretch at 1-21 (MACLGFLLPVGFLLLISTVAG) is a signal peptide. Topologically, residues 22 to 186 (GKYGVAHVVS…APPEPIIDYN (165 aa)) are lumenal. The PA domain occupies 83–163 (SPSQRPLRQT…HYADMLDILS (81 aa)). A glycan (N-linked (GlcNAc...) asparagine) is linked at asparagine 100. A helical transmembrane segment spans residues 187–207 (MLVIFILAVGTVAAGGYWAGL). Residues 208–253 (TEANRLQRRRARRGGGSGGHHQLQEAAAAEGAQKEDNEDIPVDFTP) are Cytoplasmic-facing. Residues 216 to 242 (RRARRGGGSGGHHQLQEAAAAEGAQKE) form a disordered region. Residues 227 to 238 (HHQLQEAAAAEG) are compositionally biased toward low complexity. A helical transmembrane segment spans residues 254 to 274 (AMTGVVVTLSCSLMLLLYFFY). Over 275–276 (DH) the chain is Lumenal. The helical transmembrane segment at 277–297 (FVYVTIGIFGLGAGIGLYSCL) threads the bilayer. Residues 298 to 319 (SPLVCRLSLRQYQRPPHSLWAS) are Cytoplasmic-facing. Residues 320-340 (LPLPLLLLASLCATVIIFWVA) traverse the membrane as a helical segment. The Lumenal segment spans residues 341 to 346 (YRNEDR). The helical transmembrane segment at 347 to 365 (WAWLLQDTLGISYCLFVLH) threads the bilayer. The Cytoplasmic portion of the chain corresponds to 366-376 (RVRLPTLKNCS). The chain crosses the membrane as a helical span at residues 377-397 (SFLLALLAFDVFFVFVTPFFT). Aspartate 386 is an active-site residue. Residues 398–439 (KTGESIMAQVALGPAESSSHERLPMVLKVPRLRVSALTLCSQ) lie on the Lumenal side of the membrane. The helical transmembrane segment at 440 to 460 (PFSILGFGDIVVPGFLVAYCC) threads the bilayer. Aspartate 448 is a catalytic residue. Residues 461–472 (RFDVQVCSRQIY) are Cytoplasmic-facing. Residues 473–493 (FVACTVAYAVGLLVTFMAMVL) traverse the membrane as a helical segment. Over 494–495 (MQ) the chain is Lumenal. The chain crosses the membrane as a helical span at residues 496 to 516 (MGQPALLYLVSSTLLTSLAVA). Residues 499 to 501 (PAL) carry the PAL motif. Residues 517 to 684 (ACRQELSLFW…RKSMSTQAPL (168 aa)) lie on the Cytoplasmic side of the membrane. A disordered region spans residues 548 to 614 (KQEGAADAHT…SDAHLDPNEL (67 aa)). Residues 582–592 (EIVTISENEAT) are compositionally biased toward polar residues. The segment covering 594–611 (PEDRSDSSEGWSDAHLDP) has biased composition (basic and acidic residues).

This sequence belongs to the peptidase A22B family. In terms of assembly, interacts (via active sites) with FREY; the interaction stabilizes FREY1 protein and inhibits SPPL2C proteolytic activity. Glycosylated. In terms of tissue distribution, highly expressed in testis where it is primarily localised in spermatids (at protein level).

The protein resides in the endoplasmic reticulum membrane. Functionally, sperm-specific intramembrane-cleaving aspartic protease (I-CLiP) that cleaves distinct tail-anchored proteins and SNARE proteins. In elongated spermatids, modulates intracellular Ca(2+) homeostasis by controlling PLN abundance through proteolytic cleavage. During spermatogenesis, processes SNARE proteins and impacts vesicular trafficking which supports compartmental reorganization in maturating spermatids and may play a role in formation of the acrosome. In round spermatids, acts as a scaffold protein supporting FREY1 in IZUMO1 recruitment at the endoplasmic reticulum membrane and coordination of IZUMO1 complex assembly. Stabilizes FREY1 at the endoplasmic reticulum membrane through interaction. May recruit IZUMO1 interaction partners. This is Signal peptide peptidase-like 2C from Homo sapiens (Human).